The chain runs to 362 residues: 3-dehydroquinate synthase (362 aa).

NAD(+) is bound by residues 71-76 (DGEQYK), 105-109 (GVIGD), 129-130 (TT), Lys-142, Lys-151, and 169-172 (CLKT). Residues Glu-184, His-247, and His-264 each coordinate Zn(2+).

It belongs to the sugar phosphate cyclases superfamily. Dehydroquinate synthase family. The cofactor is NAD(+). Co(2+) is required as a cofactor. It depends on Zn(2+) as a cofactor.

The protein resides in the cytoplasm. The enzyme catalyses 7-phospho-2-dehydro-3-deoxy-D-arabino-heptonate = 3-dehydroquinate + phosphate. It functions in the pathway metabolic intermediate biosynthesis; chorismate biosynthesis; chorismate from D-erythrose 4-phosphate and phosphoenolpyruvate: step 2/7. Its function is as follows. Catalyzes the conversion of 3-deoxy-D-arabino-heptulosonate 7-phosphate (DAHP) to dehydroquinate (DHQ). This Salmonella typhi protein is 3-dehydroquinate synthase.